Here is a 151-residue protein sequence, read N- to C-terminus: Phosphopantetheine adenylyltransferase (151 aa).

Serine 9 is a binding site for substrate. ATP is bound by residues 9-10 (SF) and histidine 17. Residues lysine 41, threonine 73, and arginine 87 each coordinate substrate. ATP-binding positions include 88–90 (GLR), glutamate 98, and 122–128 (KAHISST).

The protein belongs to the bacterial CoaD family. In terms of assembly, homohexamer. The cofactor is Mg(2+).

The protein localises to the cytoplasm. It catalyses the reaction (R)-4'-phosphopantetheine + ATP + H(+) = 3'-dephospho-CoA + diphosphate. Its pathway is cofactor biosynthesis; coenzyme A biosynthesis; CoA from (R)-pantothenate: step 4/5. In terms of biological role, reversibly transfers an adenylyl group from ATP to 4'-phosphopantetheine, yielding dephospho-CoA (dPCoA) and pyrophosphate. The sequence is that of Phosphopantetheine adenylyltransferase from Christiangramia forsetii (strain DSM 17595 / CGMCC 1.15422 / KT0803) (Gramella forsetii).